The chain runs to 448 residues: Exodeoxyribonuclease 7 large subunit (448 aa).

This sequence belongs to the XseA family. Heterooligomer composed of large and small subunits.

It localises to the cytoplasm. It carries out the reaction Exonucleolytic cleavage in either 5'- to 3'- or 3'- to 5'-direction to yield nucleoside 5'-phosphates.. Bidirectionally degrades single-stranded DNA into large acid-insoluble oligonucleotides, which are then degraded further into small acid-soluble oligonucleotides. This is Exodeoxyribonuclease 7 large subunit from Photobacterium profundum (strain SS9).